We begin with the raw amino-acid sequence, 346 residues long: Phosphoribosylformylglycinamidine cyclo-ligase (346 aa).

It belongs to the AIR synthase family.

The protein resides in the cytoplasm. It carries out the reaction 2-formamido-N(1)-(5-O-phospho-beta-D-ribosyl)acetamidine + ATP = 5-amino-1-(5-phospho-beta-D-ribosyl)imidazole + ADP + phosphate + H(+). Its pathway is purine metabolism; IMP biosynthesis via de novo pathway; 5-amino-1-(5-phospho-D-ribosyl)imidazole from N(2)-formyl-N(1)-(5-phospho-D-ribosyl)glycinamide: step 2/2. This Geobacillus sp. (strain WCH70) protein is Phosphoribosylformylglycinamidine cyclo-ligase.